Reading from the N-terminus, the 275-residue chain is NH(3)-dependent NAD(+) synthetase (275 aa).

50–57 (GISGGVDS) is an ATP binding site. Position 56 (D56) interacts with Mg(2+). Position 147 (R147) interacts with deamido-NAD(+). Residue T167 participates in ATP binding. E172 is a binding site for Mg(2+). K180 and D187 together coordinate deamido-NAD(+). Positions 196 and 218 each coordinate ATP. 267 to 268 (HK) serves as a coordination point for deamido-NAD(+).

It belongs to the NAD synthetase family. As to quaternary structure, homodimer.

It carries out the reaction deamido-NAD(+) + NH4(+) + ATP = AMP + diphosphate + NAD(+) + H(+). The protein operates within cofactor biosynthesis; NAD(+) biosynthesis; NAD(+) from deamido-NAD(+) (ammonia route): step 1/1. Catalyzes the ATP-dependent amidation of deamido-NAD to form NAD. Uses ammonia as a nitrogen source. In Pseudomonas putida (strain ATCC 700007 / DSM 6899 / JCM 31910 / BCRC 17059 / LMG 24140 / F1), this protein is NH(3)-dependent NAD(+) synthetase.